A 952-amino-acid chain; its full sequence is MSDYKDTLNLPETGFPMRGNLANREPEMLKRWYDEDLYGEIRKAKKGKKSFVLHDGPPYANGDIHIGHALNKILKDIIIKSKTLSGFDAPYVPGWDCHGLPIELMVEKKKGKPGQKISAAEFREECRKYAAGQVEGQKESFKRLGVMGEWDKPYRTMDFGTEANIIRSLGKIADQGHLLKGFKPVHWCTDCGSALAEAEVEYQDKVSPSIDVRFVAADEAATLAKFSTPEGHQGEGELSVVIWTTTPWTLPANRAVALHADLEYVLVQVEAHGEQKAQRLILASELAKSVLDRANIEHYHNLGFAKGSDLELLQFNHPFYNFTVPAILGEHVTTDSGTGIVHTAPGHGQEDFVVGKKYDLEIANPVGSNGVYLPDTELFAGQHVFKANDSVLEVLKEKGALLHHHAYEHSYPHCWRHKTPIIFRATPQWFISMDQAGLRAKALEEVKSVEWMPEWGQNRIEGMIEGRPEWCISRQRTWGVPIALFVHKETAELHPDSLELIEKVAKLVEEKGIQAWWDVDAAELMGEEDAANYEKVLDTLDVWFDSGVTHFSVVDSREEYNFPEEERTHSADLYLEGSDQHRGWFQSSLISSVAMKGKAPYRQVLTHGFVVDGNGRKMSKSIGNVVAPKDVTNKLGADILRLWVASTDYTNEVAVSDEILKRSADAYRRIRNTARFFLANLSGFNPATDIVPAEEMVALDRWAVGRAFAAQQEIIKSYDEYNLHEVTQRLMHFCSIEMGSFYLDVIKDRQYTAKKGGHAQRSCQTALYYIVEALVRWMAPIMSFTADEIWNEMPGEREKFVFTGEWYQGLFDLAEGEEFNNEFWTDIQAVRASVNKLLEAARGEKVIGGALQAEVTLYADDALIAKINKLEDELRFVLLTSAATVKPLSEKTESAKATELDGLFVDVVASEAAKCERCWHHVADVGTIEGHEEVCGRCVSNIDGEGEERKFA.

Residues 58–68 carry the 'HIGH' region motif; that stretch reads PYANGDIHIGH. Glu-576 contributes to the L-isoleucyl-5'-AMP binding site. The 'KMSKS' region signature appears at 617-621; it reads KMSKS. Lys-620 contacts ATP. The Zn(2+) site is built by Cys-915, Cys-918, Cys-935, and Cys-938.

This sequence belongs to the class-I aminoacyl-tRNA synthetase family. IleS type 1 subfamily. Monomer. It depends on Zn(2+) as a cofactor.

The protein resides in the cytoplasm. It carries out the reaction tRNA(Ile) + L-isoleucine + ATP = L-isoleucyl-tRNA(Ile) + AMP + diphosphate. Catalyzes the attachment of isoleucine to tRNA(Ile). As IleRS can inadvertently accommodate and process structurally similar amino acids such as valine, to avoid such errors it has two additional distinct tRNA(Ile)-dependent editing activities. One activity is designated as 'pretransfer' editing and involves the hydrolysis of activated Val-AMP. The other activity is designated 'posttransfer' editing and involves deacylation of mischarged Val-tRNA(Ile). The sequence is that of Isoleucine--tRNA ligase from Aliivibrio fischeri (strain MJ11) (Vibrio fischeri).